Consider the following 350-residue polypeptide: Secreted effector protein PipB2 (350 aa).

4 consecutive Pentapeptide repeat domains span residues 162 to 201 (ANLTAENLCDADLSGANLEGAVLFMADCEGANFKGANLSG), 202 to 241 (TSLGDSNFKNACLEDGIMCGATLDHANLTGANLQHASLLG), 247 to 286 (CNCSGANMDHTNLSGATLIRADMSGATLQGATIMAAIMED), and 287 to 326 (AVLTRANLRKASFISTNLDGADLAEANLNNTCFKDCTLTH).

Interacts with the host kinesin light chain (KLC), a subunit of the kinesin-1 motor complex.

It is found in the secreted. The protein resides in the host membrane. In terms of biological role, effector proteins function to alter host cell physiology and promote bacterial survival in host tissues. Involved in the reorganization of late endosome/lysosome (LE/Lys) compartments in mammalian cells. Necessary and sufficient to link kinesin-1 onto the Salmonella-containing vacuole (SCV) membrane. Required for centrifugal extension of lysosomal glycoprotein-rich membrane tubules, known as Salmonella-induced filaments (Sifs), away from the SCV and toward the cell periphery. Required for virulence, but not for intracellular survival and replication in phagocytic cells. The chain is Secreted effector protein PipB2 (pipB2) from Salmonella paratyphi A (strain ATCC 9150 / SARB42).